The sequence spans 317 residues: Melanocyte-stimulating hormone receptor (317 aa).

The Extracellular portion of the chain corresponds to 1–37 (MAVQGSQRRLLGSLNSTPTAIPQLGLAANQTGARCLE). Asparagine 29 carries N-linked (GlcNAc...) asparagine glycosylation. Residues 38 to 63 (VSISDGLFLSLGLVSLVENALVVATI) traverse the membrane as a helical segment. The Cytoplasmic portion of the chain corresponds to 64–72 (AKNRNLHSP). The helical transmembrane segment at 73 to 93 (MYCFICCLALSDLLVSGSNVL) threads the bilayer. Topologically, residues 94–118 (ETAVILLLEAGALVARAAVLQQLDN) are extracellular. A helical membrane pass occupies residues 119-140 (VIDVITCSSMLSSLCFLGAIAV). At 141–163 (DRYISIFYALRYHSIVTLPRARR) the chain is on the cytoplasmic side. A helical membrane pass occupies residues 164–183 (AVAAIWVASVVFSTLFIAYY). The Extracellular segment spans residues 184 to 191 (DHVAVLLC). The helical transmembrane segment at 192 to 211 (LVVFFLAMLVLMAVLYVHML) threads the bilayer. Over 212-240 (ARACQHAQGIARLHKRQRPVHQGFGLKGA) the chain is Cytoplasmic. A helical transmembrane segment spans residues 241–266 (VTLTILLGIFFLCWGPFFLHLTLIVL). Residues 267–279 (CPEHPTCGCIFKN) lie on the Extracellular side of the membrane. A helical transmembrane segment spans residues 280–300 (FNLFLALIICNAIIDPLIYAF). The Cytoplasmic portion of the chain corresponds to 301–317 (HSQELRRTLKEVLTCSW). Cysteine 315 is lipidated: S-palmitoyl cysteine.

The protein belongs to the G-protein coupled receptor 1 family. As to quaternary structure, interacts with MGRN1, but does not undergo MGRN1-mediated ubiquitination; this interaction competes with GNAS-binding and thus inhibits agonist-induced cAMP production. Interacts with OPN3; the interaction results in a decrease in MC1R-mediated cAMP signaling and ultimately a decrease in melanin production in melanocytes. In terms of tissue distribution, expressed in melanocytes. Expressed in corticoadrenal tissue.

Its subcellular location is the cell membrane. Functionally, receptor for MSH (alpha, beta and gamma) and ACTH. The activity of this receptor is mediated by G proteins which activate adenylate cyclase. Mediates melanogenesis, the production of eumelanin (black/brown) and phaeomelanin (red/yellow), via regulation of cAMP signaling in melanocytes. This Homo sapiens (Human) protein is Melanocyte-stimulating hormone receptor (MC1R).